Here is a 234-residue protein sequence, read N- to C-terminus: Large ribosomal subunit protein uL1 (234 aa).

It belongs to the universal ribosomal protein uL1 family. Part of the 50S ribosomal subunit.

In terms of biological role, binds directly to 23S rRNA. The L1 stalk is quite mobile in the ribosome, and is involved in E site tRNA release. Functionally, protein L1 is also a translational repressor protein, it controls the translation of the L11 operon by binding to its mRNA. The polypeptide is Large ribosomal subunit protein uL1 (Salmonella arizonae (strain ATCC BAA-731 / CDC346-86 / RSK2980)).